Consider the following 174-residue polypeptide: Large ribosomal subunit protein uL6 (174 aa).

The protein belongs to the universal ribosomal protein uL6 family. As to quaternary structure, part of the 50S ribosomal subunit.

This protein binds to the 23S rRNA, and is important in its secondary structure. It is located near the subunit interface in the base of the L7/L12 stalk, and near the tRNA binding site of the peptidyltransferase center. In Acidithiobacillus ferrooxidans (strain ATCC 23270 / DSM 14882 / CIP 104768 / NCIMB 8455) (Ferrobacillus ferrooxidans (strain ATCC 23270)), this protein is Large ribosomal subunit protein uL6.